The chain runs to 193 residues: Acyl carrier protein phosphodiesterase (193 aa).

It belongs to the AcpH family.

It carries out the reaction holo-[ACP] + H2O = apo-[ACP] + (R)-4'-phosphopantetheine + H(+). Converts holo-ACP to apo-ACP by hydrolytic cleavage of the phosphopantetheine prosthetic group from ACP. This Klebsiella pneumoniae subsp. pneumoniae (strain ATCC 700721 / MGH 78578) protein is Acyl carrier protein phosphodiesterase.